A 230-amino-acid polypeptide reads, in one-letter code: MAMDLLRHRLGRIDYLPAYEAMQVFTAARTPETPDELWICEHPPVYTQGLAGKAEHVFNPGTIPVVQTNRGGQVTYHGPGQVVAYPLLDLKRAGYFIKEYVYRIEEAVIRTLVEFGVTGHRVAGAPGIYVRLDDPGSHALLPQRPMKSGLANPSFGGLGKIAALGLKVSRNCTYHGVALNVAMDLEPYTRINPCGYAGLQTVDLSTIGVCAGWDEVAELLGDKLTRYLAP.

In terms of domain architecture, BPL/LPL catalytic spans 31-230; the sequence is PETPDELWIC…GDKLTRYLAP (200 aa). Substrate-binding positions include 70–77, 163–165, and 176–178; these read RGGQVTYH, ALG, and GVA. C194 (acyl-thioester intermediate) is an active-site residue.

The protein belongs to the LipB family.

The protein resides in the cytoplasm. It catalyses the reaction octanoyl-[ACP] + L-lysyl-[protein] = N(6)-octanoyl-L-lysyl-[protein] + holo-[ACP] + H(+). The protein operates within protein modification; protein lipoylation via endogenous pathway; protein N(6)-(lipoyl)lysine from octanoyl-[acyl-carrier-protein]: step 1/2. In terms of biological role, catalyzes the transfer of endogenously produced octanoic acid from octanoyl-acyl-carrier-protein onto the lipoyl domains of lipoate-dependent enzymes. Lipoyl-ACP can also act as a substrate although octanoyl-ACP is likely to be the physiological substrate. This is Octanoyltransferase from Albidiferax ferrireducens (strain ATCC BAA-621 / DSM 15236 / T118) (Rhodoferax ferrireducens).